A 411-amino-acid chain; its full sequence is Probable UDP-arabinose 4-epimerase 3 (411 aa).

The span at 1 to 13 (MLSFSRARSQGRN) shows a compositional bias: polar residues. Residues 1 to 22 (MLSFSRARSQGRNTRPLGGGME) form a disordered region. Residues 1–31 (MLSFSRARSQGRNTRPLGGGMEYLEPKRKSN) are Cytoplasmic-facing. Residues 32–50 (VMGKIILVVSLTALCIFML) form a helical; Signal-anchor for type II membrane protein membrane-spanning segment. Topologically, residues 51 to 411 (KHAPSFTSPT…KTHPHGYASS (361 aa)) are lumenal. NAD(+) is bound at residue 71–102 (HVLVTGGAGYIGSHAALRLLKDSYRVTIVDNL). Tyr-219 acts as the Proton acceptor in catalysis.

The protein belongs to the NAD(P)-dependent epimerase/dehydratase family. The cofactor is NAD(+).

Its subcellular location is the golgi apparatus. The protein resides in the golgi stack membrane. It catalyses the reaction UDP-beta-L-arabinopyranose = UDP-alpha-D-xylose. It participates in nucleotide-sugar biosynthesis; UDP-L-arabinose biosynthesis; UDP-L-arabinose from UDP-alpha-D-xylose: step 1/1. It functions in the pathway cell wall biogenesis; cell wall polysaccharide biosynthesis. The sequence is that of Probable UDP-arabinose 4-epimerase 3 from Arabidopsis thaliana (Mouse-ear cress).